Here is a 478-residue protein sequence, read N- to C-terminus: V-type proton ATPase subunit H (478 aa).

Belongs to the V-ATPase H subunit family. In terms of assembly, V-ATPase is a heteromultimeric enzyme composed of a peripheral catalytic V1 complex (components A to H) attached to an integral membrane V0 proton pore complex (components: a, c, c', c'', d, e, f and VOA1). Interacts with YND1.

It localises to the vacuole membrane. Subunit of the V1 complex of vacuolar(H+)-ATPase (V-ATPase), a multisubunit enzyme composed of a peripheral complex (V1) that hydrolyzes ATP and a membrane integral complex (V0) that translocates protons. V-ATPase is responsible for acidifying and maintaining the pH of intracellular compartments. This subunit is essential for activity, but not assembly, of the enzyme complex. This subunit is also required for silencing the ATPase activity of V-ATPase when V1 is detached from V0. This chain is V-type proton ATPase subunit H, found in Saccharomyces cerevisiae (strain ATCC 204508 / S288c) (Baker's yeast).